The following is a 492-amino-acid chain: Probable cytochrome P450 310a1 (492 aa).

A heme-binding site is contributed by C428.

This sequence belongs to the cytochrome P450 family. Heme is required as a cofactor.

It localises to the endoplasmic reticulum membrane. The protein resides in the microsome membrane. In terms of biological role, may be involved in the metabolism of insect hormones and in the breakdown of synthetic insecticides. This Drosophila melanogaster (Fruit fly) protein is Probable cytochrome P450 310a1 (Cyp310a1).